The chain runs to 174 residues: Protein RESISTANCE TO POWDERY MILDEW 8.2 (174 aa).

Positions 1 to 153 constitute an RPW8 domain; that stretch reads MIAEVAAGGA…IMPQPKFEIH (153 aa). Residues 7 to 23 traverse the membrane as a helical segment; it reads AGGALGLALSVLHEAVK. Positions 68–145 form a coiled coil; sequence VNKRLKLLLE…EISTKLDKIM (78 aa).

The protein belongs to the plant RPW8 protein family.

It localises to the membrane. Disease resistance (R) protein that induces localized, salicylic acid-dependent defenses. Confers resistance to powdery mildew (e.g. Erysiphe cichoracearum UCSC1). The chain is Protein RESISTANCE TO POWDERY MILDEW 8.2 from Arabidopsis thaliana (Mouse-ear cress).